A 625-amino-acid polypeptide reads, in one-letter code: 1-deoxy-D-xylulose-5-phosphate synthase 1 (625 aa).

Residues H74 and 115–117 contribute to the thiamine diphosphate site; that span reads GHT. A Mg(2+)-binding site is contributed by D146. Residues 147 to 148, N175, Y286, and E368 each bind thiamine diphosphate; that span reads GS. N175 is a binding site for Mg(2+).

This sequence belongs to the transketolase family. DXPS subfamily. Homodimer. Requires Mg(2+) as cofactor. Thiamine diphosphate serves as cofactor.

It catalyses the reaction D-glyceraldehyde 3-phosphate + pyruvate + H(+) = 1-deoxy-D-xylulose 5-phosphate + CO2. Its pathway is metabolic intermediate biosynthesis; 1-deoxy-D-xylulose 5-phosphate biosynthesis; 1-deoxy-D-xylulose 5-phosphate from D-glyceraldehyde 3-phosphate and pyruvate: step 1/1. Its function is as follows. Catalyzes the acyloin condensation reaction between C atoms 2 and 3 of pyruvate and glyceraldehyde 3-phosphate to yield 1-deoxy-D-xylulose-5-phosphate (DXP). This Geobacter metallireducens (strain ATCC 53774 / DSM 7210 / GS-15) protein is 1-deoxy-D-xylulose-5-phosphate synthase 1.